We begin with the raw amino-acid sequence, 219 residues long: Interleukin-6 (219 aa).

The N-terminal stretch at 1–20 (MNSSTRYLSLLSALVVLVKG) is a signal peptide. Cys-103 and Cys-111 are disulfide-bonded.

The protein belongs to the IL-6 superfamily. In terms of assembly, component of a hexamer of two molecules each of IL6, IL6R and IL6ST; first binds to IL6R to associate with the signaling subunit IL6ST. In terms of tissue distribution, expressed in spleen, gill and gastrointestinal tract, ovary and brain. Highest expression in ovary.

The protein localises to the secreted. Its function is as follows. Cytokine with a wide variety of biological functions in immunity, tissue regeneration, and metabolism. Binds to IL6R, then the complex associates to the signaling subunit IL6ST/gp130 to trigger the intracellular IL6-signaling pathway. The interaction with the membrane-bound IL6R and IL6ST stimulates 'classic signaling', whereas the binding of IL6 and soluble IL6R to IL6ST stimulates 'trans-signaling'. Alternatively, 'cluster signaling' occurs when membrane-bound IL6:IL6R complexes on transmitter cells activate IL6ST receptors on neighboring receiver cells. This is Interleukin-6 (il6) from Oncorhynchus mykiss (Rainbow trout).